Here is a 109-residue protein sequence, read N- to C-terminus: Thiosulfate sulfurtransferase GlpE (109 aa).

Positions 16–104 (REQGAVVVDI…WRTTYPAEIS (89 aa)) constitute a Rhodanese domain. The Cysteine persulfide intermediate role is filled by C64.

This sequence belongs to the GlpE family.

The protein resides in the cytoplasm. It carries out the reaction thiosulfate + hydrogen cyanide = thiocyanate + sulfite + 2 H(+). The catalysed reaction is thiosulfate + [thioredoxin]-dithiol = [thioredoxin]-disulfide + hydrogen sulfide + sulfite + 2 H(+). Its function is as follows. Transferase that catalyzes the transfer of sulfur from thiosulfate to thiophilic acceptors such as cyanide or dithiols. May function in a CysM-independent thiosulfate assimilation pathway by catalyzing the conversion of thiosulfate to sulfite, which can then be used for L-cysteine biosynthesis. The polypeptide is Thiosulfate sulfurtransferase GlpE (Pseudomonas fluorescens (strain SBW25)).